A 504-amino-acid polypeptide reads, in one-letter code: Glutamate--tRNA ligase (504 aa).

Positions Pro-10–Thr-20 match the 'HIGH' region motif. A 'KMSKS' region motif is present at residues Lys-251–Arg-255. Position 254 (Lys-254) interacts with ATP.

This sequence belongs to the class-I aminoacyl-tRNA synthetase family. Glutamate--tRNA ligase type 1 subfamily. Monomer.

The protein localises to the cytoplasm. The catalysed reaction is tRNA(Glu) + L-glutamate + ATP = L-glutamyl-tRNA(Glu) + AMP + diphosphate. Functionally, catalyzes the attachment of glutamate to tRNA(Glu) in a two-step reaction: glutamate is first activated by ATP to form Glu-AMP and then transferred to the acceptor end of tRNA(Glu). This is Glutamate--tRNA ligase from Cellvibrio japonicus (strain Ueda107) (Pseudomonas fluorescens subsp. cellulosa).